The primary structure comprises 201 residues: Orotate phosphoribosyltransferase (201 aa).

113–121 (EDIITTGKS) provides a ligand contact to 5-phospho-alpha-D-ribose 1-diphosphate. Positions 117 and 145 each coordinate orotate.

Belongs to the purine/pyrimidine phosphoribosyltransferase family. PyrE subfamily. In terms of assembly, homodimer. It depends on Mg(2+) as a cofactor.

The enzyme catalyses orotidine 5'-phosphate + diphosphate = orotate + 5-phospho-alpha-D-ribose 1-diphosphate. The protein operates within pyrimidine metabolism; UMP biosynthesis via de novo pathway; UMP from orotate: step 1/2. Its function is as follows. Catalyzes the transfer of a ribosyl phosphate group from 5-phosphoribose 1-diphosphate to orotate, leading to the formation of orotidine monophosphate (OMP). The polypeptide is Orotate phosphoribosyltransferase (Helicobacter pylori (strain Shi470)).